The following is a 1146-amino-acid chain: Nucleolar protein 6 (1146 aa).

Residues 1–48 are disordered; it reads MGPAPAGEQLRGATGEPEVMEPALEGTGKEGKKASSRKRTLAEPPAKG. Serine 56 bears the Phosphoserine mark. Residues 83–114 adopt a coiled-coil conformation; it reads LLRLQVEELLKEVRLSEKKKDRIDAFLREVNQ. Phosphoserine occurs at positions 283, 289, and 811.

Belongs to the NRAP family. In terms of assembly, part of the small subunit (SSU) processome, composed of more than 70 proteins and the RNA chaperone small nucleolar RNA (snoRNA) U3. Interacts with RRP7A; required for NOL6 localization to nucleolus.

The protein localises to the nucleus. Its subcellular location is the nucleolus. It is found in the chromosome. In terms of biological role, part of the small subunit (SSU) processome, first precursor of the small eukaryotic ribosomal subunit. During the assembly of the SSU processome in the nucleolus, many ribosome biogenesis factors, an RNA chaperone and ribosomal proteins associate with the nascent pre-rRNA and work in concert to generate RNA folding, modifications, rearrangements and cleavage as well as targeted degradation of pre-ribosomal RNA by the RNA exosome. The chain is Nucleolar protein 6 from Homo sapiens (Human).